Consider the following 120-residue polypeptide: uncharacterized protein (120 aa).

The 114-residue stretch at 7-120 (VFAKIITKNL…KLIGLINNND (114 aa)) folds into the HIT domain. Residues 101 to 105 (HFHFH) carry the Histidine triad motif motif.

This is an uncharacterized protein from Rickettsia prowazekii (strain Madrid E).